The chain runs to 335 residues: Beta-hexosaminidase (335 aa).

Residues D60, R68, R133, and 163 to 164 contribute to the substrate site; that span reads KH. H176 functions as the Proton donor/acceptor in the catalytic mechanism. D247 serves as the catalytic Nucleophile.

The protein belongs to the glycosyl hydrolase 3 family. NagZ subfamily.

The protein localises to the cytoplasm. The catalysed reaction is Hydrolysis of terminal non-reducing N-acetyl-D-hexosamine residues in N-acetyl-beta-D-hexosaminides.. It participates in cell wall biogenesis; peptidoglycan recycling. Plays a role in peptidoglycan recycling by cleaving the terminal beta-1,4-linked N-acetylglucosamine (GlcNAc) from peptide-linked peptidoglycan fragments, giving rise to free GlcNAc, anhydro-N-acetylmuramic acid and anhydro-N-acetylmuramic acid-linked peptides. The protein is Beta-hexosaminidase of Stenotrophomonas maltophilia (strain K279a).